Reading from the N-terminus, the 607-residue chain is Ceramide kinase (607 aa).

The DAGKc domain maps to 135–358 (DRPKSLMVFV…LDIAQVVRWK (224 aa)). ATP contacts are provided by residues 145–149 (HPLCG), Thr176, and 205–211 (GDGLFNE). 204-207 (GGDG) is a substrate binding site. Residue Asp206 is the Proton donor/acceptor of the active site. Residues 247–297 (NDLSNSELTGDDANAISGSSNTPDDHEPLLSTTRSTGLDISSSDSSDEPCN) form a disordered region. Residues 276–286 (LSTTRSTGLDI) are compositionally biased toward polar residues. Residue Ser320 participates in ATP binding. The CXXXCXXC signature appears at 454–461 (CRTNCLIC).

The cofactor is Ca(2+). Requires Mg(2+) as cofactor. Highly expressed in leaves and at lower levels in stems.

The catalysed reaction is an N-acylsphing-4-enine + ATP = an N-acylsphing-4-enine 1-phosphate + ADP + H(+). Catalyzes specifically the phosphorylation of ceramide to form ceramide 1-phosphate. Possesses activity on ceramide analog (C6 synthetic ceramide) in vitro. Ceramide is a critical sphingolipid metabolite that induces programmed cell death (PCD) in plants and ceramide-1-phosphate has a PCD suppressive effect. Thus, ceramide phosphorylation plays a role in the modulation of PCD and CERK activity is crucial for the maintenance of cell viability. In Oryza sativa subsp. japonica (Rice), this protein is Ceramide kinase (CERK).